We begin with the raw amino-acid sequence, 176 residues long: WASH complex subunit 3 (176 aa).

Positions 47 to 74 (ETKFVEMERQLQKTEAALIILEAKLASI) form a coiled coil. 2 disordered regions span residues 84 to 123 (ATEAPAISNQQRNEEASMVDTTEPPTTENPTEPELPPESV) and 152 to 176 (KMQSEGLEPRILDTPDLILADGQRE). The segment covering 104–115 (TTEPPTTENPTE) has biased composition (low complexity).

Belongs to the CCDC53 family. As to quaternary structure, component of the WASH complex.

The protein localises to the early endosome. Acts at least in part as component of the WASH complex which may regulate wash nucleation-promoting factor (NPF) activity and is required for its membrane targeting during endosomal sorting. During embryogenesis, not involved in the wash-dependent developmental migration of hemocytes anteriorly from the tail. The chain is WASH complex subunit 3 from Drosophila melanogaster (Fruit fly).